Reading from the N-terminus, the 88-residue chain is ATPase inhibitor mai-1, mitochondrial (88 aa).

Gly residues predominate over residues 1–18; sequence MSGSGSGSGAGHGGGSGG. The disordered stretch occupies residues 1–41; sequence MSGSGSGSGAGHGGGSGGSIREAGGSLGMMGATREEEYFRR. Residues 39–87 adopt a coiled-coil conformation; that stretch reads FRRQQKDQLDNLKKKLEADMTQSQQEIRDHEKVLEQHQQRLKEIEKGHG.

Belongs to the ATPase inhibitor family. Post-translationally, does not seem to include a transit peptide.

The protein resides in the mitochondrion. Thought to be a regulatory component of the ATP-synthesizing complex in the mitochondria. In Caenorhabditis elegans, this protein is ATPase inhibitor mai-1, mitochondrial (mai-1).